The chain runs to 913 residues: Polyribonucleotide nucleotidyltransferase (913 aa).

The disordered stretch occupies residues 407-427; it reads YMHNYEMPPYSTGETGRVGSP. Mg(2+)-binding residues include Asp521 and Asp527. The region spanning 587-646 is the KH domain; that stretch reads PRIITTSVPVEKIGEVIGPKGKMINQIQEDTGAEIAIEDDGTVFISSEGGEAAEKAKAII. Residues 658-730 form the S1 motif domain; sequence GETYNGKVVK…DRGKISLAIP (73 aa). The segment at 727 to 913 is disordered; sequence LAIPGFEDQE…VRRDFDPFED (187 aa). 3 stretches are compositionally biased toward basic and acidic residues: residues 742–789, 797–865, and 872–898; these read SRGD…RRSD, DRPR…DRRG, and RGSD…ERTE.

It belongs to the polyribonucleotide nucleotidyltransferase family. Mg(2+) is required as a cofactor.

The protein localises to the cytoplasm. The enzyme catalyses RNA(n+1) + phosphate = RNA(n) + a ribonucleoside 5'-diphosphate. Functionally, involved in mRNA degradation. Catalyzes the phosphorolysis of single-stranded polyribonucleotides processively in the 3'- to 5'-direction. This Bifidobacterium longum (strain DJO10A) protein is Polyribonucleotide nucleotidyltransferase.